Here is a 209-residue protein sequence, read N- to C-terminus: Outer-membrane lipoprotein LolB (209 aa).

Positions 1–17 are cleaved as a signal peptide; the sequence is MATVFSRALGALVLGVA. Cysteine 18 carries the N-palmitoyl cysteine lipid modification. Cysteine 18 is lipidated: S-diacylglycerol cysteine.

This sequence belongs to the LolB family. Monomer.

The protein resides in the cell outer membrane. Functionally, plays a critical role in the incorporation of lipoproteins in the outer membrane after they are released by the LolA protein. The polypeptide is Outer-membrane lipoprotein LolB (Ralstonia nicotianae (strain ATCC BAA-1114 / GMI1000) (Ralstonia solanacearum)).